Reading from the N-terminus, the 128-residue chain is Sulfurtransferase TusD (128 aa).

The active-site Cysteine persulfide intermediate is the Cys-78.

The protein belongs to the DsrE/TusD family. As to quaternary structure, heterohexamer, formed by a dimer of trimers. The hexameric TusBCD complex contains 2 copies each of TusB, TusC and TusD. The TusBCD complex interacts with TusE.

It is found in the cytoplasm. Functionally, part of a sulfur-relay system required for 2-thiolation of 5-methylaminomethyl-2-thiouridine (mnm(5)s(2)U) at tRNA wobble positions. Accepts sulfur from TusA and transfers it in turn to TusE. This Escherichia fergusonii (strain ATCC 35469 / DSM 13698 / CCUG 18766 / IAM 14443 / JCM 21226 / LMG 7866 / NBRC 102419 / NCTC 12128 / CDC 0568-73) protein is Sulfurtransferase TusD.